The chain runs to 574 residues: Proline--tRNA ligase (574 aa).

Belongs to the class-II aminoacyl-tRNA synthetase family. ProS type 1 subfamily. As to quaternary structure, homodimer.

The protein localises to the cytoplasm. The catalysed reaction is tRNA(Pro) + L-proline + ATP = L-prolyl-tRNA(Pro) + AMP + diphosphate. Catalyzes the attachment of proline to tRNA(Pro) in a two-step reaction: proline is first activated by ATP to form Pro-AMP and then transferred to the acceptor end of tRNA(Pro). As ProRS can inadvertently accommodate and process non-cognate amino acids such as alanine and cysteine, to avoid such errors it has two additional distinct editing activities against alanine. One activity is designated as 'pretransfer' editing and involves the tRNA(Pro)-independent hydrolysis of activated Ala-AMP. The other activity is designated 'posttransfer' editing and involves deacylation of mischarged Ala-tRNA(Pro). The misacylated Cys-tRNA(Pro) is not edited by ProRS. The sequence is that of Proline--tRNA ligase from Anaeromyxobacter sp. (strain K).